The sequence spans 451 residues: Serine--tRNA ligase (451 aa).

258-260 (TSE) is a binding site for L-serine. 289-291 (RSE) contributes to the ATP binding site. L-serine is bound at residue E312. 376–379 (EISS) contributes to the ATP binding site. An L-serine-binding site is contributed by S411.

The protein belongs to the class-II aminoacyl-tRNA synthetase family. Type-1 seryl-tRNA synthetase subfamily. Homodimer. The tRNA molecule binds across the dimer.

It is found in the cytoplasm. The enzyme catalyses tRNA(Ser) + L-serine + ATP = L-seryl-tRNA(Ser) + AMP + diphosphate + H(+). It carries out the reaction tRNA(Sec) + L-serine + ATP = L-seryl-tRNA(Sec) + AMP + diphosphate + H(+). Its pathway is aminoacyl-tRNA biosynthesis; selenocysteinyl-tRNA(Sec) biosynthesis; L-seryl-tRNA(Sec) from L-serine and tRNA(Sec): step 1/1. Catalyzes the attachment of serine to tRNA(Ser). Is also able to aminoacylate tRNA(Sec) with serine, to form the misacylated tRNA L-seryl-tRNA(Sec), which will be further converted into selenocysteinyl-tRNA(Sec). This Bordetella bronchiseptica (strain ATCC BAA-588 / NCTC 13252 / RB50) (Alcaligenes bronchisepticus) protein is Serine--tRNA ligase.